A 150-amino-acid polypeptide reads, in one-letter code: Classical arabinogalactan protein 6 (150 aa).

The N-terminal stretch at 1–20 is a signal peptide; that stretch reads MARQFVVLVLLTLTIATAFA. 2 stretches are compositionally biased toward low complexity: residues 19–75 and 85–98; these read FAAD…SPAA and SASS…APTV. The disordered stretch occupies residues 19-131; sequence FAADAPSASP…ESPKSGAVTT (113 aa). Ser-126 carries the GPI-anchor amidated serine lipid modification. The propeptide at 127–150 is removed in mature form; the sequence is GAVTTAKFSVVGTVATVGFFFFSF.

The protein belongs to the classical AGP family. O-glycosylated on the hydroxyproline residues. In terms of tissue distribution, expressed in the anthers.

It is found in the cell membrane. Functionally, proteoglycan that seems to be implicated in diverse developmental roles such as differentiation, cell-cell recognition, embryogenesis and programmed cell death. Plays an important role during the formation of the nexine layer of the pollen wall. This Arabidopsis thaliana (Mouse-ear cress) protein is Classical arabinogalactan protein 6 (AGP6).